The sequence spans 375 residues: Period circadian protein (375 aa).

Disordered stretches follow at residues 28–118, 140–189, and 220–254; these read TAPV…AVTP, KHRE…WEGE, and CQASGAGGGGSGSVGGTGNIGSGGSNAQPSTNQYA. Positions 69–91 are enriched in low complexity; the sequence is SGNFTTGSNLHMSSVTNTSNAGT. Gly residues predominate over residues 92 to 113; it reads GTSGTGNSGGGGGGGGGGGPGN. Residues 145 to 156 show a composition bias toward basic and acidic residues; that stretch reads RGRSGEKNKKSA. Positions 224–243 are enriched in gly residues; sequence GAGGGGSGSVGGTGNIGSGG. The span at 245–254 shows a compositional bias: polar residues; the sequence is NAQPSTNQYA.

Forms a heterodimer with timeless (TIM); the complex then translocates into the nucleus. Post-translationally, phosphorylated with a circadian rhythmicity, probably by the double-time protein (dbt). Phosphorylation could be implicated in the stability of per monomer and in the formation of heterodimer per-tim.

It is found in the nucleus. The protein localises to the cytoplasm. It localises to the perinuclear region. In terms of biological role, essential for biological clock functions. Determines the period length of circadian and ultradian rhythms; an increase in PER dosage leads to shortened circadian rhythms and a decrease leads to lengthened circadian rhythms. Essential for the circadian rhythmicity of locomotor activity, eclosion behavior, and for the rhythmic component of the male courtship song that originates in the thoracic nervous system. The biological cycle depends on the rhythmic formation and nuclear localization of the TIM-PER complex. Light induces the degradation of TIM, which promotes elimination of PER. Nuclear activity of the heterodimer coordinatively regulates PER and TIM transcription through a negative feedback loop. Behaves as a negative element in circadian transcriptional loop. Does not appear to bind DNA, suggesting indirect transcriptional inhibition. The chain is Period circadian protein (per) from Drosophila capricorni (Fruit fly).